A 177-amino-acid chain; its full sequence is Apoptosis regulatory protein Siva (177 aa).

Y34 carries the phosphotyrosine; by ABL2 modification. The tract at residues 36–55 (REVFERTKQLLFQGAQAYRD) is interaction with BCL2L1 isoform Bcl-x(L) and inhibition of BCL2L1 anti-apoptotic activity.

As to quaternary structure, binds through its N-terminal region to the C-terminus of CD27 and to PXMP2/PMP22. Binds to the C-terminus of TNFRSF18/GITR. Binds to BCL2L1/BCLX isoform Bcl-x(L) but not to BAX. Zn(2+) serves as cofactor. As to expression, in post-ischemic kidney, found in cells lining the S3 segment of proximal tubules at 12 hours and 1 day post-ischemia. At five and seven days post-ischemia, found in epithelial cells of papillary proliferations in regenerating tubules.

Its subcellular location is the cytoplasm. It is found in the nucleus. Its function is as follows. Induces CD27-mediated apoptosis. Inhibits BCL2L1 isoform Bcl-x(L) anti-apoptotic activity. Inhibits activation of NF-kappa-B and promotes T-cell receptor-mediated apoptosis. In Rattus norvegicus (Rat), this protein is Apoptosis regulatory protein Siva (Siva1).